A 478-amino-acid chain; its full sequence is tRNA modification GTPase MnmE (478 aa).

3 residues coordinate (6S)-5-formyl-5,6,7,8-tetrahydrofolate: Arg-25, Glu-82, and Lys-135. Residues 231-400 (GIKVVIAGQP…LRQRLLQVVG (170 aa)) form the TrmE-type G domain. Residue Asn-241 participates in K(+) binding. GTP contacts are provided by residues 241–246 (NAGKSS), 260–266 (TPIAGTT), and 285–288 (DTAG). Ser-245 provides a ligand contact to Mg(2+). The K(+) site is built by Thr-260, Ile-262, and Thr-265. Position 266 (Thr-266) interacts with Mg(2+). Lys-478 contacts (6S)-5-formyl-5,6,7,8-tetrahydrofolate.

The protein belongs to the TRAFAC class TrmE-Era-EngA-EngB-Septin-like GTPase superfamily. TrmE GTPase family. As to quaternary structure, homodimer. Heterotetramer of two MnmE and two MnmG subunits. K(+) serves as cofactor.

It is found in the cytoplasm. Its function is as follows. Exhibits a very high intrinsic GTPase hydrolysis rate. Involved in the addition of a carboxymethylaminomethyl (cmnm) group at the wobble position (U34) of certain tRNAs, forming tRNA-cmnm(5)s(2)U34. This Polaromonas sp. (strain JS666 / ATCC BAA-500) protein is tRNA modification GTPase MnmE.